The sequence spans 192 residues: Peptidyl-tRNA hydrolase (192 aa).

His17 is a tRNA binding site. Catalysis depends on His22, which acts as the Proton acceptor. Residues Phe68, Asn70, and Asn116 each contribute to the tRNA site.

The protein belongs to the PTH family. Monomer.

It localises to the cytoplasm. It catalyses the reaction an N-acyl-L-alpha-aminoacyl-tRNA + H2O = an N-acyl-L-amino acid + a tRNA + H(+). Hydrolyzes ribosome-free peptidyl-tRNAs (with 1 or more amino acids incorporated), which drop off the ribosome during protein synthesis, or as a result of ribosome stalling. Its function is as follows. Catalyzes the release of premature peptidyl moieties from peptidyl-tRNA molecules trapped in stalled 50S ribosomal subunits, and thus maintains levels of free tRNAs and 50S ribosomes. This chain is Peptidyl-tRNA hydrolase, found in Stenotrophomonas maltophilia (strain K279a).